The following is a 674-amino-acid chain: Sodium/hydrogen exchanger 1 (674 aa).

The N-terminal stretch at 1-24 (MKLNKSYILIVVLLLSLFYSSVSS) is a signal peptide. Residues 31–65 (KSNNHYNSDNSNNDNKNININNNNDGDGDDDDDNN) are disordered. Residues 37-55 (NSDNSNNDNKNININNNND) are compositionally biased toward low complexity. 12 helical membrane passes run 120-140 (TIIF…YFII), 144-164 (IPFV…GIVF), 175-195 (VVSF…IFET), 213-233 (MFAV…IYIV), 275-297 (LYIL…YSVV), 314-334 (VVAI…SLIL), 336-356 (WINI…FSYM), 359-379 (VLAG…GITL), 401-421 (TAAF…LTAH), 432-452 (WSIL…CFLL), 460-480 (IPWV…FAFS), and 499-519 (NTLL…YPLL). The segment at 591-674 (HELDSNPLRF…NKNNDTLPLI (84 aa)) is disordered. Over residues 601–618 (DDDEEDDDDEDLDFDSDL) the composition is skewed to acidic residues. Low complexity predominate over residues 627 to 657 (DSIHQSDNNNNDNGNNNNNNNNIIINNNSQH). The span at 662–674 (GSNNKNNDTLPLI) shows a compositional bias: polar residues.

This sequence belongs to the monovalent cation:proton antiporter 1 (CPA1) transporter (TC 2.A.36) family.

Its subcellular location is the membrane. With respect to regulation, LY294002, an inhibitor of the catalytic subunit of PI3-kinase, blocks NHE1-dependent (but not NHE1-independent) increase in intracellular pH in response to cAMP. Its function is as follows. Regulation of intracellular pH homeostasis in response to cAMP, which is essential for chemotaxis. Necessary for F-actin localization and the kinetics of actin polymerization during chemotaxis and cell polarity but not for directional sensing. The polypeptide is Sodium/hydrogen exchanger 1 (nhe1) (Dictyostelium discoideum (Social amoeba)).